The primary structure comprises 56 residues: Bowman-Birk type proteinase inhibitor I-2B (56 aa).

4 cysteine pairs are disulfide-bonded: Cys10–Cys25, Cys15–Cys23, Cys32–Cys39, and Cys36–Cys51.

Belongs to the Bowman-Birk serine protease inhibitor family.

This Triticum aestivum (Wheat) protein is Bowman-Birk type proteinase inhibitor I-2B.